The sequence spans 263 residues: HTH-type transcriptional repressor NanR (263 aa).

A disordered region spans residues 1-22 (MGLMNAFDSQTEDSSPAIGRNL). In terms of domain architecture, HTH gntR-type spans 30-98 (KKLSEMVEEE…NGERARVSRP (69 aa)). The segment at residues 58–77 (ERELMAFFNVGRPSVREALA) is a DNA-binding region (H-T-H motif).

It belongs to the NanR family.

In terms of biological role, transcriptional repressor that controls expression of the genes required for the catabolism of sialic acids. The polypeptide is HTH-type transcriptional repressor NanR (Shigella boydii serotype 4 (strain Sb227)).